A 209-amino-acid polypeptide reads, in one-letter code: Ion-translocating oxidoreductase complex subunit G (209 aa).

A helical membrane pass occupies residues 9–29 (GITLALFAAGATGLTAVVNSL). Position 175 is an FMN phosphoryl threonine (Thr175).

It belongs to the RnfG family. In terms of assembly, the complex is composed of six subunits: RnfA, RnfB, RnfC, RnfD, RnfE and RnfG. Requires FMN as cofactor.

It localises to the cell inner membrane. Part of a membrane-bound complex that couples electron transfer with translocation of ions across the membrane. This is Ion-translocating oxidoreductase complex subunit G from Yersinia pestis.